The following is a 332-amino-acid chain: FAD-dependent monooxygenase elcE (332 aa).

This sequence belongs to the oxygen-dependent FAD-linked oxidoreductase family.

It functions in the pathway secondary metabolite biosynthesis. Its function is as follows. FAD-dependent monooxygenase; part of the gene cluster that mediates the biosynthesis of elsinochrome C, a perelyenequinone phytotoxin structurally similar to cercosporin. The first step of elsinochrome C biosynthesis is performed by the polyketide synthase elcA which catalyzes the formation of nor-toralactone. The starter unit acyltransferase (SAT) domain of elcA initiates polyketide extension by the selective utilization of acetyl-CoA, which is elongated to the heptaketide in the beta-ketoacyl synthase (KS) domain by successive condensations with six malonyl units introduced by the malonyl acyltransferase (MAT) domain. The product template (PT) domain catalyzes C4-C9 and C2-C11 aldol cyclizations and dehydrations to a trihydroxynaphthalene, which is thought to be delivered to the thioesterase (TE) domain for product release. The bifunctional enzyme elcB then methylates nor-toralactone to toralactone before conducting an unusual oxidative aromatic ring opening. The next step in perylenequinone biosynthesis is an O-methylation at the nascent OH-6 of the elcB product performed by the O-methyltransferase elcD. The oxidative coupling of the two monomeric naphthol units in perylenequinone biosynthesis is catalyzed by the FAD-dependent monooxygenase elcE and the multicopper oxidase elcG. ElcG might catalyze the first intermolecular coupling in a regio- and stereo-selective manner via a phenol radical coupling mechanism and the elcE could forge the second C-C bond intramolecularly via a hydride transfer mechanism. The fasciclin domain-containing protein elcF might also play a role duting this step. The last piece of the puzzle in the biosynthesis of elsinochrome C is the additional annulation by enolate coupling to afford the dihydrobenzo(ghi)perylenequinone system, catalyzed by the FAD-dependent monooxygenase elcH. The polypeptide is FAD-dependent monooxygenase elcE (Phaeosphaeria nodorum (strain SN15 / ATCC MYA-4574 / FGSC 10173) (Glume blotch fungus)).